The sequence spans 215 residues: Cytochrome b6 (215 aa).

The helical transmembrane segment at 32-52 (IFYCLGGITLVCFLIQFATGF) threads the bilayer. Residue Cys35 participates in heme c binding. The heme b site is built by His86 and His100. 3 helical membrane passes run 90–110 (ASMMVLMMILHVFRVYLTGGF), 116–136 (LTWVSGVILAVITVSFGVTGY), and 186–206 (AHTFVLPWLIAVFMLFHFLMI). Heme b is bound by residues His187 and His202.

This sequence belongs to the cytochrome b family. PetB subfamily. As to quaternary structure, the 4 large subunits of the cytochrome b6-f complex are cytochrome b6, subunit IV (17 kDa polypeptide, PetD), cytochrome f and the Rieske protein, while the 4 small subunits are PetG, PetL, PetM and PetN. The complex functions as a dimer. It depends on heme b as a cofactor. Requires heme c as cofactor.

Its subcellular location is the cellular thylakoid membrane. In terms of biological role, component of the cytochrome b6-f complex, which mediates electron transfer between photosystem II (PSII) and photosystem I (PSI), cyclic electron flow around PSI, and state transitions. This is Cytochrome b6 from Trichormus variabilis (strain ATCC 29413 / PCC 7937) (Anabaena variabilis).